A 455-amino-acid polypeptide reads, in one-letter code: Exodeoxyribonuclease 7 large subunit (455 aa).

This sequence belongs to the XseA family. In terms of assembly, heterooligomer composed of large and small subunits.

Its subcellular location is the cytoplasm. The catalysed reaction is Exonucleolytic cleavage in either 5'- to 3'- or 3'- to 5'-direction to yield nucleoside 5'-phosphates.. Bidirectionally degrades single-stranded DNA into large acid-insoluble oligonucleotides, which are then degraded further into small acid-soluble oligonucleotides. This chain is Exodeoxyribonuclease 7 large subunit, found in Koribacter versatilis (strain Ellin345).